Consider the following 49-residue polypeptide: Protein YdfW (49 aa).

The tract at residues 16–49 (PKADHPWLTRRTQSHQQVKPPKLPKKKPDPDKKD) is disordered.

Functionally, may be involved in H(2) production during fermentative growth. This Escherichia coli (strain K12) protein is Protein YdfW (ydfW).